A 1081-amino-acid polypeptide reads, in one-letter code: Zinc finger protein 827 (1081 aa).

Residues 1–10 (MPRRKQEQPK) show a composition bias toward basic and acidic residues. Residues 1–14 (MPRRKQEQPKRLPS) are mediates direct interaction with RBBP4. The segment at 1-77 (MPRRKQEQPK…DTSLGSTTPS (77 aa)) is disordered. The short motif at 3 to 5 (RRK) is the RRK motif; mediates NuRD recruitment to telomeres element. A compositionally biased stretch (polar residues) spans 62 to 77 (EQSTSPDTSLGSTTPS). Residues Lys176, Lys216, and Lys226 each participate in a glycyl lysine isopeptide (Lys-Gly) (interchain with G-Cter in SUMO2) cross-link. Disordered stretches follow at residues 258–280 (KKVS…SFLS) and 305–348 (EKSS…SLEL). Residues 327 to 344 (VSPPPPPPPPPPPPPPPQ) are compositionally biased toward pro residues. Residues Lys360 and Lys372 each participate in a glycyl lysine isopeptide (Lys-Gly) (interchain with G-Cter in SUMO2) cross-link. C2H2-type zinc fingers lie at residues 374–396 (FQCP…MVIH), 402–424 (HQCP…MKVH), and 433–455 (FQCQ…MRCH). Glycyl lysine isopeptide (Lys-Gly) (interchain with G-Cter in SUMO2) cross-links involve residues Lys466, Lys475, Lys523, Lys549, Lys580, Lys587, and Lys597. Positions 525 to 553 (EPKEDNGLPTSFTLNTADRPANHTKLKDP) are disordered. Over residues 616 to 627 (VFSPESEVSTPG) the composition is skewed to polar residues. Residues 616 to 640 (VFSPESEVSTPGVSEDALKPQEGKG) form a disordered region. The segment covering 631–640 (DALKPQEGKG) has biased composition (basic and acidic residues). Residues Lys634, Lys639, and Lys658 each participate in a glycyl lysine isopeptide (Lys-Gly) (interchain with G-Cter in SUMO2) cross-link. Residue Lys673 forms a Glycyl lysine isopeptide (Lys-Gly) (interchain with G-Cter in SUMO1); alternate linkage. Lys673 participates in a covalent cross-link: Glycyl lysine isopeptide (Lys-Gly) (interchain with G-Cter in SUMO2); alternate. Glycyl lysine isopeptide (Lys-Gly) (interchain with G-Cter in SUMO2) cross-links involve residues Lys704, Lys710, Lys742, Lys778, and Lys798. C2H2-type zinc fingers lie at residues 817–839 (FPCD…LSLH) and 845–867 (YKCH…LTVH). Glycyl lysine isopeptide (Lys-Gly) (interchain with G-Cter in SUMO2) cross-links involve residues Lys870 and Lys891. 2 consecutive C2H2-type zinc fingers follow at residues 897 to 919 (YSCH…MSLH) and 929 to 952 (ICCT…GTKH). Over residues 947–960 (HIGTKHTGEDRKTP) the composition is skewed to basic and acidic residues. The tract at residues 947–1013 (HIGTKHTGED…GSQPSLNSEE (67 aa)) is disordered. Lys958 is covalently cross-linked (Glycyl lysine isopeptide (Lys-Gly) (interchain with G-Cter in SUMO2)). Low complexity predominate over residues 961–978 (SESNSPSSSSLSALSDSA). Over residues 979–988 (NSKDDSDGSQ) the composition is skewed to basic and acidic residues. Lys1014 is covalently cross-linked (Glycyl lysine isopeptide (Lys-Gly) (interchain with G-Cter in SUMO2)). 2 C2H2-type zinc fingers span residues 1019–1041 (FECV…LQIH) and 1047–1069 (FECD…KKCH).

It belongs to the krueppel C2H2-type zinc-finger protein family. In terms of assembly, part of a transcription inhibitory ribonucleoprotein complex composed at least of the circular RNA circZNF827, HNRNPK and HNRNPL. Interacts with the nucleosome remodeling and histone deacetylase/NuRD complex. Interacts with RBBP4; the interaction is direct and recruits RBBP4, a component of the NuRD complex, to telomeres.

The protein localises to the nucleus. It localises to the chromosome. Its subcellular location is the telomere. Its function is as follows. As part of a ribonucleoprotein complex composed at least of HNRNPK, HNRNPL and the circular RNA circZNF827 that nucleates the complex on chromatin, may negatively regulate the transcription of genes involved in neuronal differentiation. Could also recruit the nucleosome remodeling and histone deacetylase/NuRD complex to telomeric regions of chromosomes to regulate chromatin remodeling as part of telomere maintenance. The sequence is that of Zinc finger protein 827 (ZNF827) from Macaca fascicularis (Crab-eating macaque).